A 360-amino-acid polypeptide reads, in one-letter code: Peptide chain release factor 1 (360 aa).

An N5-methylglutamine modification is found at Q237.

It belongs to the prokaryotic/mitochondrial release factor family. In terms of processing, methylated by PrmC. Methylation increases the termination efficiency of RF1.

Its subcellular location is the cytoplasm. Peptide chain release factor 1 directs the termination of translation in response to the peptide chain termination codons UAG and UAA. The chain is Peptide chain release factor 1 from Nitrosococcus oceani (strain ATCC 19707 / BCRC 17464 / JCM 30415 / NCIMB 11848 / C-107).